The primary structure comprises 62 residues: Large ribosomal subunit protein bL28 (62 aa).

The protein belongs to the bacterial ribosomal protein bL28 family.

In Acetivibrio thermocellus (strain ATCC 27405 / DSM 1237 / JCM 9322 / NBRC 103400 / NCIMB 10682 / NRRL B-4536 / VPI 7372) (Clostridium thermocellum), this protein is Large ribosomal subunit protein bL28.